Reading from the N-terminus, the 693-residue chain is Zinc finger protein 441 (693 aa).

A KRAB domain is found at 4–79; it reads VAFEDVAINF…ERACEIKDNS (76 aa). A C2H2-type 1 zinc finger spans residues 169–190; sequence YDCKECASFSSLENLQRHMAAH. The C2H2-type 2; degenerate zinc finger occupies 196-218; the sequence is RICKLCGNAFIWPSLFHMLRRTH. The segment at 224 to 246 adopts a C2H2-type 3; degenerate zinc-finger fold; the sequence is YEYEQCSTAFPAYSSTLRHERTH. The C2H2-type 4; degenerate zinc-finger motif lies at 252-274; the sequence is YQCKQCGKAFSCSCYTQLYERTH. 15 consecutive C2H2-type zinc fingers follow at residues 280 to 302, 308 to 330, 336 to 358, 364 to 386, 392 to 413, 419 to 441, 447 to 469, 475 to 497, 503 to 525, 531 to 553, 559 to 581, 587 to 609, 615 to 637, 643 to 665, and 671 to 693; these read YECK…MIVH, HKCK…KRTH, YECK…MITH, HKCK…ETTH, YKCE…ETTH, YKCK…ERIH, YKCK…EKTH, YECK…MIMH, HKCK…ERIH, YKCK…ERTH, YGCQ…MITH, HKCK…ERTH, YECK…ERVH, and YKCK…EMTH.

It belongs to the krueppel C2H2-type zinc-finger protein family.

The protein localises to the nucleus. In terms of biological role, may be involved in transcriptional regulation. The sequence is that of Zinc finger protein 441 (ZNF441) from Homo sapiens (Human).